The primary structure comprises 295 residues: Fructose-bisphosphate aldolase class 1 (295 aa).

The Proton acceptor role is filled by E176. The active-site Schiff-base intermediate with dihydroxyacetone-P is K213.

Belongs to the class I fructose-bisphosphate aldolase family.

It carries out the reaction beta-D-fructose 1,6-bisphosphate = D-glyceraldehyde 3-phosphate + dihydroxyacetone phosphate. It functions in the pathway carbohydrate degradation; glycolysis; D-glyceraldehyde 3-phosphate and glycerone phosphate from D-glucose: step 4/4. In Treponema denticola (strain ATCC 35405 / DSM 14222 / CIP 103919 / JCM 8153 / KCTC 15104), this protein is Fructose-bisphosphate aldolase class 1.